We begin with the raw amino-acid sequence, 424 residues long: Serine hydroxymethyltransferase 2 (424 aa).

Residues Leu-125 and 129–131 (GHL) contribute to the (6S)-5,6,7,8-tetrahydrofolate site. N6-(pyridoxal phosphate)lysine is present on Lys-234. Glu-250 is a (6S)-5,6,7,8-tetrahydrofolate binding site.

It belongs to the SHMT family. In terms of assembly, homodimer. It depends on pyridoxal 5'-phosphate as a cofactor.

The protein localises to the cytoplasm. It carries out the reaction (6R)-5,10-methylene-5,6,7,8-tetrahydrofolate + glycine + H2O = (6S)-5,6,7,8-tetrahydrofolate + L-serine. It participates in one-carbon metabolism; tetrahydrofolate interconversion. The protein operates within amino-acid biosynthesis; glycine biosynthesis; glycine from L-serine: step 1/1. Functionally, catalyzes the reversible interconversion of serine and glycine with tetrahydrofolate (THF) serving as the one-carbon carrier. This reaction serves as the major source of one-carbon groups required for the biosynthesis of purines, thymidylate, methionine, and other important biomolecules. Also exhibits THF-independent aldolase activity toward beta-hydroxyamino acids, producing glycine and aldehydes, via a retro-aldol mechanism. The sequence is that of Serine hydroxymethyltransferase 2 from Ralstonia nicotianae (strain ATCC BAA-1114 / GMI1000) (Ralstonia solanacearum).